A 361-amino-acid polypeptide reads, in one-letter code: Mitogen-activated protein kinase 14A (361 aa).

A Protein kinase domain is found at 25 to 309 (YQNLSPVGSG…AAEALAHPYF (285 aa)). ATP-binding positions include 31–39 (VGSGAYGTV) and Lys54. Asp151 functions as the Proton acceptor in the catalytic mechanism. The residue at position 181 (Thr181) is a Phosphothreonine; by MAP2K6. The TXY motif lies at 181–183 (TGY). Tyr183 is modified (phosphotyrosine; by MAP2K6).

Belongs to the protein kinase superfamily. CMGC Ser/Thr protein kinase family. MAP kinase subfamily. The cofactor is Mg(2+). In terms of processing, dually phosphorylated on Thr-181 and Tyr-183, which activates the enzyme. In terms of tissue distribution, exclusively expressed in the ovary.

Its subcellular location is the cytoplasm. The protein resides in the nucleus. The enzyme catalyses L-seryl-[protein] + ATP = O-phospho-L-seryl-[protein] + ADP + H(+). The catalysed reaction is L-threonyl-[protein] + ATP = O-phospho-L-threonyl-[protein] + ADP + H(+). Activated by threonine and tyrosine phosphorylation by the dual specificity kinase, MKK6. Functionally, serine/threonine kinase which acts as an essential component of the MAP kinase signal transduction pathway. Mapk14a is one of the four p38 MAPKs which play an important role in the cascades of cellular responses evoked by extracellular stimuli such as pro-inflammatory cytokines or physical stress leading to direct activation of transcription factors. Accordingly, p38 MAPKs phosphorylate a broad range of proteins and it has been estimated that they may have approximately 200 to 300 substrates each. Some of the targets are downstream kinases which are activated through phosphorylation and further phosphorylate additional targets. In Cyprinus carpio (Common carp), this protein is Mitogen-activated protein kinase 14A (mapk14a).